Consider the following 507-residue polypeptide: Inactive alanine aminotransferase (507 aa).

Pyridoxal 5'-phosphate-binding residues include A173, S174, Y199, N255, and S324. N6-(pyridoxal phosphate)lysine is present on K327. R336 contacts pyridoxal 5'-phosphate.

Belongs to the class-I pyridoxal-phosphate-dependent aminotransferase family. Alanine aminotransferase subfamily. Homodimer. Pyridoxal 5'-phosphate serves as cofactor.

The protein localises to the cytoplasm. The protein resides in the nucleus. Functionally, inactive alanine aminotransferase. Forms a catalytically active Schiff base with PLP, but lacks alanine transaminase activity, probably due to an altered structural conformation of the dimeric enzyme. This suggests this protein may have a yet undiscovered physiological function. The sequence is that of Inactive alanine aminotransferase (ALT2) from Saccharomyces cerevisiae (strain ATCC 204508 / S288c) (Baker's yeast).